A 381-amino-acid polypeptide reads, in one-letter code: MASQGQRVSWGDESTKRRGRSNSRGRKNNDIPLSFFNPITLEQGSKFWDLCPRDFVPKGIGNKDQQIGYWNRQTRYRMVKGRRKNLPEKWFFYYLGTGPHADAKFKQKLDGVVWVARGDSMTKPTTLGTRGTNNESKALKFDVKVPSEFHLEVNQLRDNSRSRSQSRSQSRNRSQSRGRQLSNNKKDDNVEQAVLAALKKLGVDTEKQQRSRSKSKERSSSKTRDTTPKNENKHTWKRTAGKGDVTKFYGARSSSANFGDSDLVANGNGAKHYPQLAECVPSVSSILFGSHWTAKEDGDQIEVTFTHKYHLPKDDPKTGQFLQQINAYARPSEVAKEQRQRKARSKSVERVEQEVVPDALTENYTDVFDDTQVEIIDEVTN.

2 disordered regions span residues 1-29 (MASQ…RKNN) and 152-239 (EVNQ…WKRT). The residue at position 9 (serine 9) is a Phosphoserine; by host. The segment covering 17 to 26 (RRGRSNSRGR) has biased composition (basic residues). The CoV N NTD domain maps to 31–153 (IPLSFFNPIT…KVPSEFHLEV (123 aa)). The segment at 33-159 (LSFFNPITLE…HLEVNQLRDN (127 aa)) is RNA-binding. Residues 154–183 (NQLRDNSRSRSQSRSQSRNRSQSRGRQLSN) show a composition bias toward low complexity. The span at 201-234 (LGVDTEKQQRSRSKSKERSSSKTRDTTPKNENKH) shows a compositional bias: basic and acidic residues. The CoV N CTD domain occupies 223 to 336 (TRDTTPKNEN…AYARPSEVAK (114 aa)). Residues 230 to 333 (NENKHTWKRT…QINAYARPSE (104 aa)) form a dimerization region. Residues serine 253 and serine 255 each carry the phosphoserine; by host modification. The tract at residues 331–353 (PSEVAKEQRQRKARSKSVERVEQ) is disordered. Positions 333–353 (EVAKEQRQRKARSKSVERVEQ) are enriched in basic and acidic residues.

Belongs to the alphacoronavirus nucleocapsid protein family. Homooligomer. Both monomeric and oligomeric forms interact with RNA. Interacts with protein M. Interacts with NSP3; this interaction serves to tether the genome to the newly translated replicase-transcriptase complex at a very early stage of infection. ADP-ribosylated. The ADP-ribosylation is retained in the virion during infection. In terms of processing, phosphorylated on serine and threonine residues.

Its subcellular location is the virion. It localises to the host endoplasmic reticulum-Golgi intermediate compartment. The protein localises to the host Golgi apparatus. Packages the positive strand viral genome RNA into a helical ribonucleocapsid (RNP) and plays a fundamental role during virion assembly through its interactions with the viral genome and membrane protein M. Plays an important role in enhancing the efficiency of subgenomic viral RNA transcription as well as viral replication. The protein is Nucleoprotein of Canis lupus familiaris (Dog).